The following is a 309-amino-acid chain: Oxygen-dependent coproporphyrinogen-III oxidase (309 aa).

A substrate-binding site is contributed by S100. A divalent metal cation is bound by residues H104 and H114. H114 functions as the Proton donor in the catalytic mechanism. 116-118 (NVR) is a substrate binding site. A divalent metal cation-binding residues include H153 and H183. Residues 248-283 (YAEFNLVYDRGTLFGLQSGGRTESILMSLPPIVHWE) form an important for dimerization region. A substrate-binding site is contributed by 266 to 268 (GGR).

This sequence belongs to the aerobic coproporphyrinogen-III oxidase family. Homodimer. It depends on a divalent metal cation as a cofactor.

It localises to the cytoplasm. It carries out the reaction coproporphyrinogen III + O2 + 2 H(+) = protoporphyrinogen IX + 2 CO2 + 2 H2O. It participates in porphyrin-containing compound metabolism; protoporphyrin-IX biosynthesis; protoporphyrinogen-IX from coproporphyrinogen-III (O2 route): step 1/1. Functionally, involved in the heme biosynthesis. Catalyzes the aerobic oxidative decarboxylation of propionate groups of rings A and B of coproporphyrinogen-III to yield the vinyl groups in protoporphyrinogen-IX. The chain is Oxygen-dependent coproporphyrinogen-III oxidase from Legionella pneumophila (strain Lens).